Here is a 779-residue protein sequence, read N- to C-terminus: Endonuclease MutS2 (779 aa).

328-335 (GPNTGGKT) contributes to the ATP binding site. In terms of domain architecture, Smr spans 704–779 (LDLRGKRYEE…GSGATIVTLG (76 aa)).

It belongs to the DNA mismatch repair MutS family. MutS2 subfamily. In terms of assembly, homodimer. Binds to stalled ribosomes, contacting rRNA.

In terms of biological role, endonuclease that is involved in the suppression of homologous recombination and thus may have a key role in the control of bacterial genetic diversity. Its function is as follows. Acts as a ribosome collision sensor, splitting the ribosome into its 2 subunits. Detects stalled/collided 70S ribosomes which it binds and splits by an ATP-hydrolysis driven conformational change. Acts upstream of the ribosome quality control system (RQC), a ribosome-associated complex that mediates the extraction of incompletely synthesized nascent chains from stalled ribosomes and their subsequent degradation. Probably generates substrates for RQC. The sequence is that of Endonuclease MutS2 from Streptococcus pyogenes serotype M5 (strain Manfredo).